The primary structure comprises 184 residues: Bifunctional protein PyrR (184 aa).

A PRPP-binding motif is present at residues 98–110 (VVLVDDVLYTGRT).

Belongs to the purine/pyrimidine phosphoribosyltransferase family. PyrR subfamily.

It carries out the reaction UMP + diphosphate = 5-phospho-alpha-D-ribose 1-diphosphate + uracil. In terms of biological role, regulates the transcription of the pyrimidine nucleotide (pyr) operon in response to exogenous pyrimidines. Its function is as follows. Also displays a weak uracil phosphoribosyltransferase activity which is not physiologically significant. The protein is Bifunctional protein PyrR of Roseiflexus castenholzii (strain DSM 13941 / HLO8).